A 208-amino-acid chain; its full sequence is FMN-dependent NADH:quinone oxidoreductase 2 (208 aa).

The protein belongs to the azoreductase type 1 family. In terms of assembly, homodimer. FMN is required as a cofactor.

The catalysed reaction is 2 a quinone + NADH + H(+) = 2 a 1,4-benzosemiquinone + NAD(+). It carries out the reaction N,N-dimethyl-1,4-phenylenediamine + anthranilate + 2 NAD(+) = 2-(4-dimethylaminophenyl)diazenylbenzoate + 2 NADH + 2 H(+). In terms of biological role, quinone reductase that provides resistance to thiol-specific stress caused by electrophilic quinones. Functionally, also exhibits azoreductase activity. Catalyzes the reductive cleavage of the azo bond in aromatic azo compounds to the corresponding amines. The chain is FMN-dependent NADH:quinone oxidoreductase 2 from Bacillus cereus (strain ATCC 10987 / NRS 248).